Reading from the N-terminus, the 314-residue chain is tRNA(Ile)-lysidine synthase, chloroplastic (314 aa).

Position 31–36 (31–36) interacts with ATP; the sequence is SGGQDS.

It belongs to the tRNA(Ile)-lysidine synthase family.

Its subcellular location is the plastid. The protein localises to the chloroplast. It carries out the reaction cytidine(34) in tRNA(Ile2) + L-lysine + ATP = lysidine(34) in tRNA(Ile2) + AMP + diphosphate + H(+). Functionally, ligates lysine onto the cytidine present at position 34 of the AUA codon-specific tRNA(Ile) that contains the anticodon CAU, in an ATP-dependent manner. Cytidine is converted to lysidine, thus changing the amino acid specificity of the tRNA from methionine to isoleucine. The sequence is that of tRNA(Ile)-lysidine synthase, chloroplastic from Cyanidium caldarium (Red alga).